Here is a 257-residue protein sequence, read N- to C-terminus: 3-dehydroquinate dehydratase (257 aa).

3-dehydroquinate contacts are provided by residues E50–R52 and R86. The active-site Proton donor/acceptor is the H147. The active-site Schiff-base intermediate with substrate is K174. 3-dehydroquinate is bound by residues R216, S235, and Q239.

The protein belongs to the type-I 3-dehydroquinase family. In terms of assembly, homodimer.

It carries out the reaction 3-dehydroquinate = 3-dehydroshikimate + H2O. It functions in the pathway metabolic intermediate biosynthesis; chorismate biosynthesis; chorismate from D-erythrose 4-phosphate and phosphoenolpyruvate: step 3/7. Functionally, involved in the third step of the chorismate pathway, which leads to the biosynthesis of aromatic amino acids. Catalyzes the cis-dehydration of 3-dehydroquinate (DHQ) and introduces the first double bond of the aromatic ring to yield 3-dehydroshikimate. The sequence is that of 3-dehydroquinate dehydratase from Geobacillus thermodenitrificans (strain NG80-2).